We begin with the raw amino-acid sequence, 155 residues long: Protein LOL2 (155 aa).

Met-1 is subject to N-acetylmethionine. The interval 1 to 35 (MEEIQQQTQKEEQKHREEEEEEEEGPPPGWESAVL) is disordered. Putative zinc finger regions lie at residues 60-90 (QMVC…VNLV) and 98-128 (QVNC…VTDI). The interval 130–155 (ENNKRPPWSEQQGPLKSLSSLRRAEN) is disordered. Over residues 138–149 (SEQQGPLKSLSS) the composition is skewed to polar residues.

It localises to the nucleus. Its function is as follows. Putative zinc finger that may be involved in programmed cell death and defense response. This chain is Protein LOL2 (LOL2), found in Arabidopsis thaliana (Mouse-ear cress).